A 379-amino-acid chain; its full sequence is L-lactate dehydrogenase (379 aa).

Residues 1 to 379 (MIISASTDYR…IGRDSLVSLP (379 aa)) form the FMN hydroxy acid dehydrogenase domain. Residue Tyr-24 participates in substrate binding. 2 residues coordinate FMN: Ser-106 and Gln-127. Residue Tyr-129 coordinates substrate. Thr-155 provides a ligand contact to FMN. Position 164 (Arg-164) interacts with substrate. Position 251 (Lys-251) interacts with FMN. His-275 (proton acceptor) is an active-site residue. Residue Arg-278 participates in substrate binding. 306–330 (DSGIRTGLDVVRMLALGADTVLLGR) is a binding site for FMN.

The protein belongs to the FMN-dependent alpha-hydroxy acid dehydrogenase family. It depends on FMN as a cofactor.

The protein localises to the cell inner membrane. The catalysed reaction is (S)-lactate + A = pyruvate + AH2. Functionally, catalyzes the conversion of L-lactate to pyruvate. Is coupled to the respiratory chain. This chain is L-lactate dehydrogenase, found in Stenotrophomonas maltophilia (strain K279a).